Consider the following 390-residue polypeptide: GTPase Obg (390 aa).

Residues 1–159 (MKFVDEASIL…RELLLELMLL (159 aa)) form the Obg domain. The segment at 127 to 147 (NTRFKSSVNRTPRQKTNGTPG) is disordered. Residues 129 to 145 (RFKSSVNRTPRQKTNGT) are compositionally biased toward polar residues. Residues 160-333 (ADVGMLGMPN…LCWDVMTFII (174 aa)) enclose the OBG-type G domain. GTP contacts are provided by residues 166-173 (GMPNAGKS), 191-195 (FTTLV), 213-216 (DIPG), 283-286 (NKID), and 314-316 (SAA). The Mg(2+) site is built by Ser173 and Thr193.

It belongs to the TRAFAC class OBG-HflX-like GTPase superfamily. OBG GTPase family. In terms of assembly, monomer. Mg(2+) is required as a cofactor.

Its subcellular location is the cytoplasm. Functionally, an essential GTPase which binds GTP, GDP and possibly (p)ppGpp with moderate affinity, with high nucleotide exchange rates and a fairly low GTP hydrolysis rate. Plays a role in control of the cell cycle, stress response, ribosome biogenesis and in those bacteria that undergo differentiation, in morphogenesis control. This is GTPase Obg from Shigella dysenteriae serotype 1 (strain Sd197).